A 239-amino-acid polypeptide reads, in one-letter code: UDP-2,3-diacylglucosamine hydrolase (239 aa).

Mn(2+)-binding residues include aspartate 8, histidine 10, aspartate 41, asparagine 78, and histidine 113. 78–79 (NR) serves as a coordination point for substrate. 5 residues coordinate substrate: aspartate 121, serine 159, asparagine 163, lysine 166, and histidine 194. Mn(2+) contacts are provided by histidine 194 and histidine 196.

This sequence belongs to the LpxH family. Requires Mn(2+) as cofactor.

It localises to the cell inner membrane. The enzyme catalyses UDP-2-N,3-O-bis[(3R)-3-hydroxytetradecanoyl]-alpha-D-glucosamine + H2O = 2-N,3-O-bis[(3R)-3-hydroxytetradecanoyl]-alpha-D-glucosaminyl 1-phosphate + UMP + 2 H(+). Its pathway is glycolipid biosynthesis; lipid IV(A) biosynthesis; lipid IV(A) from (3R)-3-hydroxytetradecanoyl-[acyl-carrier-protein] and UDP-N-acetyl-alpha-D-glucosamine: step 4/6. Its function is as follows. Hydrolyzes the pyrophosphate bond of UDP-2,3-diacylglucosamine to yield 2,3-diacylglucosamine 1-phosphate (lipid X) and UMP by catalyzing the attack of water at the alpha-P atom. Involved in the biosynthesis of lipid A, a phosphorylated glycolipid that anchors the lipopolysaccharide to the outer membrane of the cell. The sequence is that of UDP-2,3-diacylglucosamine hydrolase from Shewanella sp. (strain MR-4).